A 34-amino-acid polypeptide reads, in one-letter code: Cycloamanide E proprotein (34 aa).

Residues Met1–Pro10 constitute a propeptide that is removed on maturation. The segment at residues Ser11 to Pro17 is a cross-link (cyclopeptide (Ser-Pro)). Residues Cys18–Cys34 constitute a propeptide that is removed on maturation.

The protein belongs to the MSDIN fungal toxin family. Post-translationally, processed by the macrocyclase-peptidase enzyme POPB to yield a cyclic decapeptide. POPB first removes 10 residues from the N-terminus. Conformational trapping of the remaining peptide forces the enzyme to release this intermediate rather than proceed to macrocyclization. The enzyme rebinds the remaining peptide in a different conformation and catalyzes macrocyclization of the N-terminal 7 residues.

In terms of biological role, cyclic heptapeptide that belongs to the MSDIN-like toxin family responsible for a large number of food poisoning cases and deaths. Cycloaminide E is structurally related to other cycloamanides that are non-toxic to mammals but show immunosuppressive activity. The protein is Cycloamanide E proprotein of Amanita phalloides (Death cap).